The following is a 1691-amino-acid chain: Helicase SWR1 (1691 aa).

The segment at 1 to 244 is disordered; that stretch reads MPETASTANV…ATSNSTNRSP (244 aa). 2 stretches are compositionally biased toward basic and acidic residues: residues 14–23 and 54–68; these read SDPDAIKTEQ and ENHHEPNHIHDDERP. The segment covering 126 to 155 has biased composition (polar residues); sequence LSKSRTSKRSTGANSNTKTEIHLTNGNSRK. Positions 232 to 243 are enriched in low complexity; the sequence is SRTATSNSTNRS. In terms of domain architecture, HSA spans 335–409; it reads PEPAEEPPRQ…RAVWISRYRI (75 aa). 2 disordered regions span residues 457 to 615 and 628 to 801; these read QARQ…AGGL and MNSE…NHKI. A compositionally biased stretch (acidic residues) spans 467-521; that stretch reads QLSEEDGFDDLSDDMSMADDDELGLASGEDEDDEDGDADSDIMSSDEEEGDEEDQ. Residues 564–575 are compositionally biased toward low complexity; it reads VDTAQATATENA. Acidic residues-rich tracts occupy residues 576 to 612 and 645 to 662; these read ETSDESVDMDDDMGSTDMDSDEEDEEEESEEESDEDA and EMPDVEAVSDGEGAEENE. Residues 671-692 show a composition bias toward basic and acidic residues; the sequence is PEPHESGALEKSTKEAVEEKEQ. 2 stretches are compositionally biased toward polar residues: residues 706-722 and 749-778; these read GLSNTDNNVQEPASQDN and PATNPPSRVHSTSPPATSETKPSELDTAST. A Helicase ATP-binding domain is found at 823–988; it reads AGLYANSTNG…WSLLFFLMPA (166 aa). 836-843 lines the ATP pocket; that stretch reads DEMGLGKT. The DEAH box motif lies at 939 to 942; the sequence is DEAH. One can recognise a Helicase C-terminal domain in the interval 1375 to 1525; it reads ILDKLLRKLQ…DVVIQEGEFT (151 aa). Disordered regions lie at residues 1594–1632 and 1669–1691; these read EIQADDADFTEKPSNNASGTSTARQGTPAGKSVLDGGLD and DTKLELPKDKKKGKKKGKDTRKR. The segment covering 1605-1618 has biased composition (polar residues); the sequence is KPSNNASGTSTARQ. Basic residues predominate over residues 1677–1691; it reads DKKKGKKKGKDTRKR.

Belongs to the SNF2/RAD54 helicase family. SWR1 subfamily. In terms of assembly, component of the SWR1 chromatin-remodeling complex.

The protein resides in the nucleus. The enzyme catalyses ATP + H2O = ADP + phosphate + H(+). Its function is as follows. Catalytic component of the SWR1 complex which mediates the ATP-dependent exchange of histone H2A for the H2A variant HZT1 leading to transcriptional regulation of selected genes by chromatin remodeling. The protein is Helicase SWR1 (SWR1) of Gibberella zeae (strain ATCC MYA-4620 / CBS 123657 / FGSC 9075 / NRRL 31084 / PH-1) (Wheat head blight fungus).